We begin with the raw amino-acid sequence, 379 residues long: Queuine tRNA-ribosyltransferase (379 aa).

Asp95 (proton acceptor) is an active-site residue. Substrate is bound by residues 95 to 99 (DSGGF), Asp149, Gln197, and Gly224. The interval 255-261 (GVGMPAE) is RNA binding. Asp274 acts as the Nucleophile in catalysis. Zn(2+)-binding residues include Cys312, Cys314, Cys317, and His343.

This sequence belongs to the queuine tRNA-ribosyltransferase family. In terms of assembly, homodimer. Within each dimer, one monomer is responsible for RNA recognition and catalysis, while the other monomer binds to the replacement base PreQ1. Zn(2+) serves as cofactor.

It carries out the reaction 7-aminomethyl-7-carbaguanine + guanosine(34) in tRNA = 7-aminomethyl-7-carbaguanosine(34) in tRNA + guanine. The protein operates within tRNA modification; tRNA-queuosine biosynthesis. Catalyzes the base-exchange of a guanine (G) residue with the queuine precursor 7-aminomethyl-7-deazaguanine (PreQ1) at position 34 (anticodon wobble position) in tRNAs with GU(N) anticodons (tRNA-Asp, -Asn, -His and -Tyr). Catalysis occurs through a double-displacement mechanism. The nucleophile active site attacks the C1' of nucleotide 34 to detach the guanine base from the RNA, forming a covalent enzyme-RNA intermediate. The proton acceptor active site deprotonates the incoming PreQ1, allowing a nucleophilic attack on the C1' of the ribose to form the product. After dissociation, two additional enzymatic reactions on the tRNA convert PreQ1 to queuine (Q), resulting in the hypermodified nucleoside queuosine (7-(((4,5-cis-dihydroxy-2-cyclopenten-1-yl)amino)methyl)-7-deazaguanosine). This Solibacter usitatus (strain Ellin6076) protein is Queuine tRNA-ribosyltransferase.